An 879-amino-acid polypeptide reads, in one-letter code: Alanine--tRNA ligase (879 aa).

Positions 566, 570, 668, and 672 each coordinate Zn(2+).

This sequence belongs to the class-II aminoacyl-tRNA synthetase family. The cofactor is Zn(2+).

Its subcellular location is the cytoplasm. The catalysed reaction is tRNA(Ala) + L-alanine + ATP = L-alanyl-tRNA(Ala) + AMP + diphosphate. Its function is as follows. Catalyzes the attachment of alanine to tRNA(Ala) in a two-step reaction: alanine is first activated by ATP to form Ala-AMP and then transferred to the acceptor end of tRNA(Ala). Also edits incorrectly charged Ser-tRNA(Ala) and Gly-tRNA(Ala) via its editing domain. The polypeptide is Alanine--tRNA ligase (Clostridium botulinum (strain Alaska E43 / Type E3)).